Reading from the N-terminus, the 313-residue chain is Ribosomal RNA small subunit methyltransferase H (313 aa).

S-adenosyl-L-methionine contacts are provided by residues 35-37 (GGH), aspartate 55, phenylalanine 79, aspartate 100, and glutamine 107.

It belongs to the methyltransferase superfamily. RsmH family.

The protein localises to the cytoplasm. The enzyme catalyses cytidine(1402) in 16S rRNA + S-adenosyl-L-methionine = N(4)-methylcytidine(1402) in 16S rRNA + S-adenosyl-L-homocysteine + H(+). Specifically methylates the N4 position of cytidine in position 1402 (C1402) of 16S rRNA. This is Ribosomal RNA small subunit methyltransferase H from Burkholderia orbicola (strain MC0-3).